Here is a 346-residue protein sequence, read N- to C-terminus: Centromere protein L (346 aa).

At Ser-41 the chain carries Phosphoserine. Thr-45 carries the phosphothreonine modification. Ser-55 is modified (phosphoserine).

It belongs to the CENP-L/IML3 family. Component of the CENPA-CAD complex, composed of CENPI, CENPK, CENPL, CENPO, CENPP, CENPQ, CENPR and CENPS. The CENPA-CAD complex interacts with the CENPA-NAC complex, at least composed of CENPA, CENPC, CENPH, CENPM, CENPN, CENPT and CENPU.

Its subcellular location is the nucleus. It localises to the chromosome. The protein resides in the centromere. Functionally, component of the CENPA-CAD (nucleosome distal) complex, a complex recruited to centromeres which is involved in assembly of kinetochore proteins, mitotic progression and chromosome segregation. May be involved in incorporation of newly synthesized CENPA into centromeres via its interaction with the CENPA-NAC complex. The sequence is that of Centromere protein L (CENPL) from Bos taurus (Bovine).